We begin with the raw amino-acid sequence, 619 residues long: Translation initiation factor eIF2B subunit delta (619 aa).

The segment covering 21-32 (GDYLDSKQEGKP) has biased composition (basic and acidic residues). Positions 21-251 (GDYLDSKQEG…PKQRGKITKK (231 aa)) are disordered. Positions 42–56 (TNTSPVSIPTIISPP) are enriched in low complexity. Positions 57–84 (LGSNNSNYGKSPKSSYDNKQTSPLLSAS) are enriched in polar residues. The span at 85–98 (NNRKNNNNNNNNNN) shows a compositional bias: low complexity. The span at 99–125 (ATSPKDSSIIGKNNVNSDLSKVSSSLN) shows a compositional bias: polar residues. A compositionally biased stretch (low complexity) spans 136–199 (STSSTPTSTP…KQQSKQQATQ (64 aa)). Over residues 200-244 (QDKKDKEQQQQQQDKQDKESNEIKGSKEVAKDGQHGVKQFDDPKQ) the composition is skewed to basic and acidic residues.

This sequence belongs to the eIF-2B alpha/beta/delta subunits family. In terms of assembly, component of the translation initiation factor 2B (eIF2B) complex which is a heterodecamer of two sets of five different subunits: alpha, beta, gamma, delta and epsilon. Subunits alpha, beta and delta comprise a regulatory subcomplex and subunits epsilon and gamma comprise a catalytic subcomplex. Within the complex, the hexameric regulatory complex resides at the center, with the two heterodimeric catalytic subcomplexes bound on opposite sides.

It localises to the cytoplasm. Its subcellular location is the cytosol. Its function is as follows. Acts as a component of the translation initiation factor 2B (eIF2B) complex, which catalyzes the exchange of GDP for GTP on eukaryotic initiation factor 2 (eIF2) gamma subunit. Its guanine nucleotide exchange factor activity is repressed when bound to eIF2 complex phosphorylated on the alpha subunit, thereby limiting the amount of methionyl-initiator methionine tRNA available to the ribosome and consequently global translation is repressed. This is Translation initiation factor eIF2B subunit delta (eif2b4) from Dictyostelium discoideum (Social amoeba).